We begin with the raw amino-acid sequence, 131 residues long: Small ribosomal subunit protein uS11 (131 aa).

It belongs to the universal ribosomal protein uS11 family. Part of the 30S ribosomal subunit. Interacts with proteins S7 and S18. Binds to IF-3.

Located on the platform of the 30S subunit, it bridges several disparate RNA helices of the 16S rRNA. Forms part of the Shine-Dalgarno cleft in the 70S ribosome. This Endomicrobium trichonymphae protein is Small ribosomal subunit protein uS11.